Consider the following 243-residue polypeptide: PHO85 cyclin-like protein psl1 (243 aa).

The span at 211-224 (ESPISHTPQQNQQD) shows a compositional bias: polar residues. The segment at 211 to 231 (ESPISHTPQQNQQDEQPRRPI) is disordered.

This sequence belongs to the cyclin family. PHO80 subfamily. Forms a cyclin-CDK complex with pef1.

The protein resides in the cytoplasm. The protein localises to the nucleus. Its function is as follows. Cyclin partner of the cyclin-dependent kinase (CDK) pef1 (PHO85 homolog). This chain is PHO85 cyclin-like protein psl1 (psl1), found in Schizosaccharomyces pombe (strain 972 / ATCC 24843) (Fission yeast).